Reading from the N-terminus, the 107-residue chain is Putidaredoxin (107 aa).

One can recognise a 2Fe-2S ferredoxin-type domain in the interval 2 to 106 (SKVVYVSHDG…GIVVDVPDRQ (105 aa)). 4 residues coordinate [2Fe-2S] cluster: C40, C46, C49, and C87.

Belongs to the adrenodoxin/putidaredoxin family. In terms of assembly, monomer. It depends on [2Fe-2S] cluster as a cofactor.

Functionally, the oxidation of camphor by cytochrome P450-CAM requires the participation of a flavoprotein, putidaredoxin reductase, and an iron-sulfur protein, putidaredoxin, to mediate the transfer of electrons from NADH to P450 for oxygen activation. The protein is Putidaredoxin (camB) of Pseudomonas putida (Arthrobacter siderocapsulatus).